The following is a 96-amino-acid chain: UPF0166 protein aq_448 (96 aa).

This sequence belongs to the UPF0166 family.

This is UPF0166 protein aq_448 from Aquifex aeolicus (strain VF5).